A 96-amino-acid chain; its full sequence is Small ribosomal subunit protein bS18c (96 aa).

Belongs to the bacterial ribosomal protein bS18 family. As to quaternary structure, part of the 30S ribosomal subunit.

Its subcellular location is the plastid. It is found in the chloroplast. The polypeptide is Small ribosomal subunit protein bS18c (rps18) (Pinus thunbergii (Japanese black pine)).